A 316-amino-acid polypeptide reads, in one-letter code: Protease HtpX homolog (316 aa).

The helical transmembrane segment at 16 to 36 (LFMGAGFLIGGATGMMIALVF) threads the bilayer. A Zn(2+)-binding site is contributed by H134. The active site involves E135. H138 contacts Zn(2+). 2 helical membrane passes run 149–169 (VTATIAGAISALANFAFFFGG) and 180–200 (LGGMIGAILIAILAPIAAMLV). E209 is a binding site for Zn(2+). Residues 295–316 (PVMAATTSSSVPLSGERGGPWS) form a disordered region.

This sequence belongs to the peptidase M48B family. It depends on Zn(2+) as a cofactor.

The protein resides in the cell inner membrane. The protein is Protease HtpX homolog of Caulobacter vibrioides (strain ATCC 19089 / CIP 103742 / CB 15) (Caulobacter crescentus).